The sequence spans 67 residues: Large ribosomal subunit protein bL31 (67 aa).

C16, C18, C36, and C39 together coordinate Zn(2+).

Belongs to the bacterial ribosomal protein bL31 family. Type A subfamily. Part of the 50S ribosomal subunit. Zn(2+) serves as cofactor.

Its function is as follows. Binds the 23S rRNA. This is Large ribosomal subunit protein bL31 from Desulforudis audaxviator (strain MP104C).